Reading from the N-terminus, the 110-residue chain is NAD(P)H-quinone oxidoreductase subunit M (110 aa).

This sequence belongs to the complex I NdhM subunit family. As to quaternary structure, NDH-1 can be composed of about 15 different subunits; different subcomplexes with different compositions have been identified which probably have different functions.

The protein resides in the cellular thylakoid membrane. It catalyses the reaction a plastoquinone + NADH + (n+1) H(+)(in) = a plastoquinol + NAD(+) + n H(+)(out). The enzyme catalyses a plastoquinone + NADPH + (n+1) H(+)(in) = a plastoquinol + NADP(+) + n H(+)(out). In terms of biological role, NDH-1 shuttles electrons from an unknown electron donor, via FMN and iron-sulfur (Fe-S) centers, to quinones in the respiratory and/or the photosynthetic chain. The immediate electron acceptor for the enzyme in this species is believed to be plastoquinone. Couples the redox reaction to proton translocation, and thus conserves the redox energy in a proton gradient. Cyanobacterial NDH-1 also plays a role in inorganic carbon-concentration. In Synechococcus elongatus (strain ATCC 33912 / PCC 7942 / FACHB-805) (Anacystis nidulans R2), this protein is NAD(P)H-quinone oxidoreductase subunit M.